The following is a 595-amino-acid chain: Pectinesterase 5 (595 aa).

A signal peptide spans 1-24 (MIGKVVVSVASILLIVGVAIGVVA). N-linked (GlcNAc...) asparagine glycans are attached at residues Asn86 and Asn206. The segment at 215–239 (SDKGAAPVNKGTPPVADDSPVADPD) is disordered. The span at 227–239 (PPVADDSPVADPD) shows a compositional bias: low complexity. Positions 243–246 (RRLL) match the RRLL cleavage motif motif. An RKLM cleavage motif motif is present at residues 263–266 (RKLM). The N-linked (GlcNAc...) asparagine glycan is linked to Asn349. The substrate site is built by Thr360 and Gln390. The active-site Proton donor is the Asp413. The Nucleophile role is filled by Asp434. Residues Arg503 and Trp505 each coordinate substrate.

The protein in the N-terminal section; belongs to the PMEI family. This sequence in the C-terminal section; belongs to the pectinesterase family. In terms of assembly, interacts with SBT6.1. In terms of tissue distribution, expressed in pollen grains and pollen tubes.

Its subcellular location is the cell membrane. It localises to the secreted. The protein localises to the cell wall. The protein resides in the golgi apparatus membrane. The enzyme catalyses [(1-&gt;4)-alpha-D-galacturonosyl methyl ester](n) + n H2O = [(1-&gt;4)-alpha-D-galacturonosyl](n) + n methanol + n H(+). It functions in the pathway glycan metabolism; pectin degradation; 2-dehydro-3-deoxy-D-gluconate from pectin: step 1/5. Functionally, acts in the modification of cell walls via demethylesterification of cell wall pectin. Plays an important role in growth of pollen tubes in female floral tissues, possibly via enhancing the interaction between the pollen tube and female floral tissues by modification of the cell walls. May be regulated by MYB80 during anther development and play a role in tapetum and pollen development. The polypeptide is Pectinesterase 5 (PME5) (Arabidopsis thaliana (Mouse-ear cress)).